Here is a 282-residue protein sequence, read N- to C-terminus: Bifunctional protein FolD (282 aa).

NADP(+) is bound by residues 166 to 168 and I232; that span reads GAS.

The protein belongs to the tetrahydrofolate dehydrogenase/cyclohydrolase family. As to quaternary structure, homodimer.

It carries out the reaction (6R)-5,10-methylene-5,6,7,8-tetrahydrofolate + NADP(+) = (6R)-5,10-methenyltetrahydrofolate + NADPH. The enzyme catalyses (6R)-5,10-methenyltetrahydrofolate + H2O = (6R)-10-formyltetrahydrofolate + H(+). It participates in one-carbon metabolism; tetrahydrofolate interconversion. Functionally, catalyzes the oxidation of 5,10-methylenetetrahydrofolate to 5,10-methenyltetrahydrofolate and then the hydrolysis of 5,10-methenyltetrahydrofolate to 10-formyltetrahydrofolate. In Haemophilus influenzae (strain PittEE), this protein is Bifunctional protein FolD.